Here is a 452-residue protein sequence, read N- to C-terminus: GTPase Der (452 aa).

EngA-type G domains lie at 4-169 (PVVA…PPAA) and 177-352 (IKVA…ESHR). Residues 10–17 (GRPNVGKS), 57–61 (DTGGL), 120–123 (NKCE), 183–190 (GRPNVGKS), 230–234 (DTAGI), and 295–298 (NKWD) contribute to the GTP site. The KH-like domain maps to 353 to 438 (RRVSTSVIND…PIRLIWRGKP (86 aa)).

It belongs to the TRAFAC class TrmE-Era-EngA-EngB-Septin-like GTPase superfamily. EngA (Der) GTPase family. Associates with the 50S ribosomal subunit.

GTPase that plays an essential role in the late steps of ribosome biogenesis. The chain is GTPase Der from Microcystis aeruginosa (strain NIES-843 / IAM M-2473).